A 350-amino-acid chain; its full sequence is Sulfate-binding protein (350 aa).

The N-terminal stretch at 1–40 (MKTAWTRRSFLQSAALATATVITIAACGGNNQSSSGGSGQ) is a signal peptide.

It belongs to the prokaryotic sulfate-binding protein family.

The protein localises to the periplasm. Its function is as follows. This protein specifically binds sulfate and is involved in its transmembrane transport. The protein is Sulfate-binding protein (sbpA) of Synechococcus elongatus (strain ATCC 33912 / PCC 7942 / FACHB-805) (Anacystis nidulans R2).